A 1002-amino-acid chain; its full sequence is Carboxypeptidase Y (1002 aa).

A signal peptide spans 1 to 18 (MLMKQTFLYFLLTCVVSA). The propeptide occupies 19–521 (QFNGYVPPEQ…AYLEMLKAEG (503 aa)). Disordered regions lie at residues 51-91 (QEES…TALE), 124-436 (DEDE…NMQS), and 527-546 (AFRD…ADSS). 2 stretches are compositionally biased toward basic and acidic residues: residues 63–81 (PERD…HEFN) and 127–143 (EHVR…EDAP). The span at 144–170 (RRKHGKCKGKGKHHKGKHAKGKGKKSH) shows a compositional bias: basic residues. Positions 171–205 (PKPEDDSVFFDDERPKHHEFDDEDREFPAHHEPGE) are enriched in basic and acidic residues. Repeat copies occupy residues 225-237 (MHHE…PPPP), 238-250 (MHHE…PPPP), 251-263 (MHHE…PPPP), 264-276 (MHHE…PPPP), 277-289 (MHHE…PPPP), 290-302 (MHHE…PPPP), 303-315 (MHHE…PPPP), 316-328 (MHHE…PPPP), 329-341 (MHHE…PPPP), 361-369 (DKEHHKGPK), 370-378 (DKEHHKGPK), 379-387 (DKEHHKGPK), 388-396 (DKEHHKGPK), 397-405 (DKEHHKGPK), and 406-414 (DKEHHKGPK). The segment at 225 to 341 (MHHEPGEHMP…EPGEHMPPPP (117 aa)) is 9 X 13 AA tandem repeats of M-H-H-E-P-G-E-H-M-P-P-P-P. Residues 343-431 (KHHELEEHEG…PKEKHNERPE (89 aa)) show a composition bias toward basic and acidic residues. The 7 X 9 AA tandem repeats of D-K-E-H-H-K-G-P-K stretch occupies residues 361-423 (DKEHHKGPKD…KDKEHHQGPK (63 aa)). The 2-7; approximate repeat unit spans residues 415-423 (DKEHHQGPK). Intrachain disulfides connect Cys627–Cys880, Cys776–Cys789, Cys799–Cys822, Cys806–Cys815, and Cys844–Cys851. A glycan (N-linked (GlcNAc...) asparagine) is linked at Asn659. The active site involves Ser715. Residue Asp921 is part of the active site. A substrate-binding site is contributed by Cys924. The active site involves His978. Substrate is bound at residue Met979.

It belongs to the peptidase S10 family. Heterodimer of two subunits of 32 kDa and 19 kDa derived from the precursor protein and linked by a disulfide bond.

The protein localises to the vacuole. The catalysed reaction is Release of a C-terminal amino acid with broad specificity.. Its function is as follows. Involved in degradation of small peptides. Digests preferentially peptides containing an aliphatic or hydrophobic residue in P1' position, as well as methionine, leucine or phenylalanine in P1 position of ester substrate. This Schizosaccharomyces pombe (strain 972 / ATCC 24843) (Fission yeast) protein is Carboxypeptidase Y (cpy1).